The chain runs to 545 residues: Lysine--tRNA ligase (545 aa).

The 'HIGH' region motif lies at 33–41; sequence VSGLQHIGR. The 'KMSKS' region signature appears at 288-292; it reads DMSSS.

It belongs to the class-I aminoacyl-tRNA synthetase family.

Its subcellular location is the cytoplasm. The catalysed reaction is tRNA(Lys) + L-lysine + ATP = L-lysyl-tRNA(Lys) + AMP + diphosphate. This is Lysine--tRNA ligase (lysS) from Aeropyrum pernix (strain ATCC 700893 / DSM 11879 / JCM 9820 / NBRC 100138 / K1).